A 226-amino-acid polypeptide reads, in one-letter code: UPF0758 protein SPs0978 (226 aa).

In terms of domain architecture, MPN spans serine 103 to leucine 225. Residues histidine 174, histidine 176, and aspartate 187 each contribute to the Zn(2+) site. Positions histidine 174–aspartate 187 match the JAMM motif motif.

This sequence belongs to the UPF0758 family.

The sequence is that of UPF0758 protein SPs0978 from Streptococcus pyogenes serotype M3 (strain SSI-1).